A 141-amino-acid polypeptide reads, in one-letter code: Nucleoside diphosphate kinase (141 aa).

Residues lysine 11, phenylalanine 59, arginine 87, threonine 93, arginine 104, and asparagine 114 each contribute to the ATP site. Residue histidine 117 is the Pros-phosphohistidine intermediate of the active site.

Belongs to the NDK family. In terms of assembly, homotetramer. The cofactor is Mg(2+).

The protein resides in the cytoplasm. It carries out the reaction a 2'-deoxyribonucleoside 5'-diphosphate + ATP = a 2'-deoxyribonucleoside 5'-triphosphate + ADP. It catalyses the reaction a ribonucleoside 5'-diphosphate + ATP = a ribonucleoside 5'-triphosphate + ADP. In terms of biological role, major role in the synthesis of nucleoside triphosphates other than ATP. The ATP gamma phosphate is transferred to the NDP beta phosphate via a ping-pong mechanism, using a phosphorylated active-site intermediate. This Proteus mirabilis (strain HI4320) protein is Nucleoside diphosphate kinase.